Here is a 411-residue protein sequence, read N- to C-terminus: Serine--tRNA ligase (411 aa).

L-serine is bound at residue 226–228; that stretch reads TSE. Residue 257 to 259 coordinates ATP; it reads RKE. Glutamate 280 contributes to the L-serine binding site. 344–347 contacts ATP; the sequence is EISS. Serine 379 is a binding site for L-serine.

It belongs to the class-II aminoacyl-tRNA synthetase family. Type-1 seryl-tRNA synthetase subfamily. Homodimer. The tRNA molecule binds across the dimer.

It localises to the cytoplasm. The catalysed reaction is tRNA(Ser) + L-serine + ATP = L-seryl-tRNA(Ser) + AMP + diphosphate + H(+). The enzyme catalyses tRNA(Sec) + L-serine + ATP = L-seryl-tRNA(Sec) + AMP + diphosphate + H(+). It participates in aminoacyl-tRNA biosynthesis; selenocysteinyl-tRNA(Sec) biosynthesis; L-seryl-tRNA(Sec) from L-serine and tRNA(Sec): step 1/1. Functionally, catalyzes the attachment of serine to tRNA(Ser). Is also able to aminoacylate tRNA(Sec) with serine, to form the misacylated tRNA L-seryl-tRNA(Sec), which will be further converted into selenocysteinyl-tRNA(Sec). The protein is Serine--tRNA ligase of Campylobacter jejuni (strain RM1221).